Here is a 388-residue protein sequence, read N- to C-terminus: Large ribosomal subunit protein uL3B (388 aa).

Positions 1-10 (MSHCKFEQPR) are enriched in basic and acidic residues. The interval 1–34 (MSHCKFEQPRHGSLGFLPRKRASRQRGKVKAFPK) is disordered. Residues 18-31 (PRKRASRQRGKVKA) are compositionally biased toward basic residues.

This sequence belongs to the universal ribosomal protein uL3 family. In terms of assembly, component of the large ribosomal subunit (LSU). Mature yeast ribosomes consist of a small (40S) and a large (60S) subunit. The 40S small subunit contains 1 molecule of ribosomal RNA (18S rRNA) and at least 33 different proteins. The large 60S subunit contains 3 rRNA molecules (25S, 5.8S and 5S rRNA) and at least 46 different proteins. uL3 forms together with ES39L one of the contact sites for the signal recognition particle that targets ribosomes to the endoplasmic reticulum membrane.

Its subcellular location is the cytoplasm. Functionally, component of the ribosome, a large ribonucleoprotein complex responsible for the synthesis of proteins in the cell. The small ribosomal subunit (SSU) binds messenger RNAs (mRNAs) and translates the encoded message by selecting cognate aminoacyl-transfer RNA (tRNA) molecules. The large subunit (LSU) contains the ribosomal catalytic site termed the peptidyl transferase center (PTC), which catalyzes the formation of peptide bonds, thereby polymerizing the amino acids delivered by tRNAs into a polypeptide chain. The nascent polypeptides leave the ribosome through a tunnel in the LSU and interact with protein factors that function in enzymatic processing, targeting, and the membrane insertion of nascent chains at the exit of the ribosomal tunnel. uL3 plays a role in coordinating processes of accommodating the aminoacyl-tRNA in the PTC. In Schizosaccharomyces pombe (strain 972 / ATCC 24843) (Fission yeast), this protein is Large ribosomal subunit protein uL3B (rpl302).